A 296-amino-acid chain; its full sequence is Uridine phosphorylase A (296 aa).

Residues Gly-46, Arg-77, and 121–124 (RLGT) each bind phosphate. Residues 125-126 (SG) and 201-203 (QGR) contribute to the uridine site.

This sequence belongs to the PNP/UDP phosphorylase family. As to quaternary structure, homodimer.

It catalyses the reaction uridine + phosphate = alpha-D-ribose 1-phosphate + uracil. It functions in the pathway pyrimidine metabolism; UMP biosynthesis via salvage pathway; uracil from uridine (phosphorylase route): step 1/1. Its function is as follows. Catalyzes the reversible phosphorylytic cleavage of uridine and deoxyuridine to uracil and ribose- or deoxyribose-1-phosphate. The produced molecules are then utilized as carbon and energy sources or in the rescue of pyrimidine bases for nucleotide synthesis. In Schistosoma mansoni (Blood fluke), this protein is Uridine phosphorylase A.